The sequence spans 132 residues: Fluoride-specific ion channel FluC 1 (132 aa).

Transmembrane regions (helical) follow at residues 9-29, 35-55, 72-89, and 100-120; these read LAAV…LSAL, ASWP…VGYF, LLGT…TMQV, and WGLA…AVHL. Positions 79 and 82 each coordinate Na(+).

It belongs to the fluoride channel Fluc/FEX (TC 1.A.43) family.

It localises to the cell membrane. It carries out the reaction fluoride(in) = fluoride(out). Na(+) is not transported, but it plays an essential structural role and its presence is essential for fluoride channel function. Fluoride-specific ion channel. Important for reducing fluoride concentration in the cell, thus reducing its toxicity. In Mycolicibacterium paratuberculosis (strain ATCC BAA-968 / K-10) (Mycobacterium paratuberculosis), this protein is Fluoride-specific ion channel FluC 1.